A 412-amino-acid chain; its full sequence is Putative competence-damage inducible protein (412 aa).

Belongs to the CinA family.

The polypeptide is Putative competence-damage inducible protein (Bacillus cereus (strain AH187)).